The following is a 97-amino-acid chain: Small ribosomal subunit protein bS6 (97 aa).

Belongs to the bacterial ribosomal protein bS6 family.

Binds together with bS18 to 16S ribosomal RNA. This chain is Small ribosomal subunit protein bS6 (rpsF), found in Lactococcus lactis subsp. lactis (strain IL1403) (Streptococcus lactis).